The sequence spans 118 residues: Small ribosomal subunit protein uS13 (118 aa).

The disordered stretch occupies residues 91-118; the sequence is HRRSLPLRGQRTKNNARTRKGPKKPIKR.

It belongs to the universal ribosomal protein uS13 family. Part of the 30S ribosomal subunit. Forms a loose heterodimer with protein S19. Forms two bridges to the 50S subunit in the 70S ribosome.

Functionally, located at the top of the head of the 30S subunit, it contacts several helices of the 16S rRNA. In the 70S ribosome it contacts the 23S rRNA (bridge B1a) and protein L5 of the 50S subunit (bridge B1b), connecting the 2 subunits; these bridges are implicated in subunit movement. Contacts the tRNAs in the A and P-sites. The polypeptide is Small ribosomal subunit protein uS13 (Hydrogenovibrio crunogenus (strain DSM 25203 / XCL-2) (Thiomicrospira crunogena)).